The sequence spans 659 residues: Heparin-sulfate lyase (659 aa).

Positions 1 to 24 (MTTKIFKRIIVFAVIALSSGNILA) are cleaved as a signal peptide. Tyr294 acts as the Proton acceptor in catalysis.

Belongs to the polysaccharide lyase 12 family.

The protein localises to the periplasm. The enzyme catalyses Elimination of sulfate, appears to act on linkages between N-acetyl-D-glucosamine and uronate. Product is an unsaturated sugar.. In terms of biological role, specifically cleaves heparan sulfate-rich regions of acidic polysaccharides. Does not act on N,O-desulfated glucosamine or N-acetyl-O-sulfated glucosamine linkages. Functions in cleaving metazoan heparan sulfate and providing carbon, nitrogen and sulfate sources for microorganisms. This is Heparin-sulfate lyase (hepC) from Pedobacter heparinus (strain ATCC 13125 / DSM 2366 / CIP 104194 / JCM 7457 / NBRC 12017 / NCIMB 9290 / NRRL B-14731 / HIM 762-3).